Here is a 499-residue protein sequence, read N- to C-terminus: 2-isopropylmalate synthase (499 aa).

A Pyruvate carboxyltransferase domain is found at 5–267 (IKIFDTTLRD…ETGINLGEIA (263 aa)). Mn(2+) is bound by residues Asp14, His202, His204, and Asn238. The regulatory domain stretch occupies residues 391–499 (SVEVLHVISG…YLSALNRIRR (109 aa)).

It belongs to the alpha-IPM synthase/homocitrate synthase family. LeuA type 1 subfamily. Requires Mn(2+) as cofactor.

Its subcellular location is the cytoplasm. It catalyses the reaction 3-methyl-2-oxobutanoate + acetyl-CoA + H2O = (2S)-2-isopropylmalate + CoA + H(+). It functions in the pathway amino-acid biosynthesis; L-leucine biosynthesis; L-leucine from 3-methyl-2-oxobutanoate: step 1/4. Functionally, catalyzes the condensation of the acetyl group of acetyl-CoA with 3-methyl-2-oxobutanoate (2-ketoisovalerate) to form 3-carboxy-3-hydroxy-4-methylpentanoate (2-isopropylmalate). The chain is 2-isopropylmalate synthase from Pyrococcus furiosus (strain ATCC 43587 / DSM 3638 / JCM 8422 / Vc1).